The following is a 781-amino-acid chain: MATQADLMELDMAMEPDRKAAVSHWQQQSYLDSGIHSGATTTAPSLSGKGNPEEEDVDTSQVLYEWEQGFSQSFTQEQVADIDGQYAMTRAQRVRAAMFPETLDEGMQIPSTQFDAAHPTNVQRLAEPSQMLKHAVVNLINYQDDAELATRAIPELTKLLNDEDQVVVNKAAVMVHQLSKKEASRHAIMRSPQMVSAIVRTMQNTNDVETARCTAGTLHNLSHHREGLLAIFKSGGIPALVKMLGSPVDSVLFYAITTLHNLLLHQEGAKMAVRLAGGLQKMVALLNKTNVKFLAITTDCLQILAYGNQESKLIILASGGPQALVNIMRTYTYEKLLWTTSRVLKVLSVCSSNKPAIVEAGGMQALGPHLTDPSQRLVQNCLWTLRNLSDAATKQEGMEGLLGTLVQLLGSDDINVVTCAAGILSNLTCNNYKNKMMVCQVGGIEALVRTVLRAGDREDITEPAICALRHLTSRHQEAEMAQNAVRLHYGLPVVVKLLHPPSHWPLIKATVGLIRNLALCPANHAPLREQGAIPRLVQLLVRAHQDTQRRTSMGGTQQQFVEGVRMEEIVEGCTGALHILARDVHNRIVIRGLNTIPLFVQLLYSPIENIQRVAAGVLCELAQDKEAAEAIEAEGATAPLTELLHSRNEGVATYAAAVLFRMSEDKPQDYKKRLSVELTSSLFRTEPMAWNETADLGLDIGAQGEALGYRQDDPSYRSFHSGGYGQDALGMDPMMEHEMGGHHPGADYPVDGLPDLGHAQDLMDGLPPGDSNQLAWFDTDL.

The residue at position 2 (alanine 2) is an N-acetylalanine. The segment at 2–23 (ATQADLMELDMAMEPDRKAAVS) is interaction with VCL. Serine 23 is subject to Phosphoserine; by GSK3-beta; alternate. Serine 23 carries an O-linked (GlcNAc) serine; alternate glycan. Serine 29 is modified (phosphoserine; by GSK3-beta). Serine 33 and serine 37 each carry phosphoserine; by GSK3-beta and HIPK2. Residues 34–57 (GIHSGATTTAPSLSGKGNPEEEDV) are disordered. Position 41 is a phosphothreonine; by GSK3-beta (threonine 41). A Phosphoserine modification is found at serine 45. Lysine 49 bears the N6-acetyllysine mark. A Phosphotyrosine; by PTK6 modification is found at tyrosine 64. Tyrosine 142 is modified (phosphotyrosine; by FYN and PTK6). ARM repeat units lie at residues 151–191 (RAIP…IMRS), 193–234 (QMVS…IFKS), 235–276 (GGIP…VRLA), 277–318 (GGLQ…ILAS), 319–360 (GGPQ…IVEA), 361–389 (GGMQ…RNLS), 400–441 (GLLG…VCQV), 442–484 (GGIE…AQNA), 489–530 (YGLP…LREQ), 531–571 (GAIP…EIVE), 594–636 (NTIP…AEGA), and 637–666 (TAPL…SEDK). An interaction with BCL9 region spans residues 156-178 (LTKLLNDEDQVVVNKAAVMVHQL). Serine 191 bears the Phosphoserine mark. Residue serine 246 is modified to Phosphoserine; by CDK5. Phosphotyrosine is present on residues tyrosine 331 and tyrosine 333. Serine 552 is modified (phosphoserine). Threonine 556 is subject to Phosphothreonine. At cysteine 619 the chain carries S-nitrosocysteine. Phosphoserine is present on serine 675. The disordered stretch occupies residues 720–781 (HSGGYGQDAL…NQLAWFDTDL (62 aa)). A compositionally biased stretch (basic and acidic residues) spans 734 to 745 (MMEHEMGGHHPG). Residues 772–781 (NQLAWFDTDL) form an interaction with SCRIB region.

This sequence belongs to the beta-catenin family. Two separate complex-associated pools are found in the cytoplasm. The majority is present as component of an E-cadherin/ catenin adhesion complex composed of at least E-cadherin/CDH1 and beta-catenin/CTNNB1, and possibly alpha-catenin/CTNNA1; the complex is located to adherens junctions. The stable association of CTNNA1 is controversial as CTNNA1 was shown not to bind to F-actin when assembled in the complex. Alternatively, the CTNNA1-containing complex may be linked to F-actin by other proteins such as LIMA1. Another cytoplasmic pool is part of a large complex containing AXIN1, AXIN2, APC, CSNK1A1 and GSK3B that promotes phosphorylation on N-terminal Ser and Thr residues and ubiquitination of CTNNB1. Interacts directly with AXIN1; the interaction is regulated by CK2 via BTRC and its subsequent degradation by the proteasome. Interacts directly with AXIN1; the interaction is regulated by CDK2 phosphorylation. Wnt-dependent activation of DVL antagonizes the action of GSK3B. When GSK3B activity is inhibited the complex dissociates, CTNNB1 is dephosphorylated and is no longer targeted for destruction. The stabilized protein translocates to the nucleus, where it binds TCF/LEF-1 family members, BCL9, BCL9L and possibly also RUVBL1 and CHD8. Binds CTNNBIP and EP300. CTNNB1 forms a ternary complex with LEF1 and EP300 that is disrupted by CTNNBIP1 binding. Interacts with TAX1BP3 (via the PDZ domain); this interaction inhibits the transcriptional activity of CTNNB1. Interacts with AJAP1, BAIAP1, CARM1, CTNNA3, CXADR and PCDH11Y. Binds NHERF1. Interacts with GLIS2. Interacts with XIRP1. Interacts with PTPRU (via the cytoplasmic juxtamembrane domain) and with SLC30A9. Interacts with EMD. Interacts with SCRIB. Interacts with TNIK and TCF7L2. Interacts with SESTD1 and TRPC4. Interacts directly with AXIN1; the interaction is regulated by CDK2 phosphorylation of AXIN1. Interacts with CAV1. Interacts with TRPV4. The TRPV4 and CTNNB1 complex can interact with CDH1. Interacts with VCL. Interacts with PTPRJ. Interacts with PKT7. Interacts with NANOS1. Interacts with CDK2, NDRG2, NEK2 and CDK5. Found in a complex composed of MACF1, APC, AXIN1, CTNNB1 and GSK3B. Interacts with PTK6. Interacts with SOX7; this interaction may lead to proteasomal degradation of active CTNNB1 and thus inhibition of Wnt/beta-catenin-stimulated transcription. Identified in a complex with HINT1 and MITF. Interacts with FHIT. The CTNNB1 and TCF4 complex interacts with PML. Interacts with FERMT2. Identified in a complex with TCF4 and FERMT2. Interacts with RAPGEF2. Interacts with FAT1 (via the cytoplasmic domain). Interacts with RORA. May interact with P-cadherin/CDH3. Interacts with RNF220. Interacts with CTNND2. Interacts (via the C-terminal region) with CBY1. The complex composed, at least, of APC, CTNNB1 and GSK3B interacts with JPT1; the interaction requires the inactive form of GSK3B (phosphorylated at 'Ser-9'). Interacts with DLG5. Interacts with FAM53B; promoting translocation to the nucleus. Interacts with TMEM170B. Interacts with AHI1. Interacts with GID8. Component of an cadherin:catenin adhesion complex composed of at least of CDH26, beta-catenin/CTNNB1, alpha-catenin/CTNNA1 and p120 catenin/CTNND1. Forms a complex comprising APPL1, RUVBL2, APPL2, HDAC1 and HDAC2. Interacts with IRF2BPL; mediates the ubiquitination and degradation of CTNNB1. Interacts with AMFR. Interacts with LMBR1L. Interacts with SOX30; prevents interaction of CTNNB1 with TCF7L2/TCF4 and leads to inhibition of Wnt signaling. Interacts with SOX9; inhibiting CTNNB1 activity by competing with the binding sites of TCF/LEF within CTNNB1, thereby inhibiting the Wnt signaling. Interacts with SPN/CD43 cytoplasmic tail. Interacts (when phosphorylated at Tyr-333) with isoform M2 of PKM (PKM2); promoting transcription activation. Interacts with PKP2 (via HEAD domain). Interacts with CDH1. Interacts (when unphosphorylated) with FLYWCH1, perhaps preventing interaction of CTNNB1 with TCF4, and thereby regulating transcription activation; phosphorylation of CTNNB1 may inhibit the interaction. Interacts (via the central armadillo domains) with probable transcriptional regulator ADNP (via N-terminal region); interaction is direct and stabilizes CTNNB1 by modulating its phosphorylation by glycogen synthase kinase-3 beta GSK3B. Interacts with NR5A2. Interacts with DSG2; the interaction promotes localization of CTNNB1 at cell junctions thus reducing its nuclear localization and subsequent transcription of CTNNB1/TCF-target genes. In terms of processing, phosphorylation by GSK3B requires prior phosphorylation of Ser-45 by another kinase. Phosphorylation proceeds then from Thr-41 to Ser-33. Phosphorylated by NEK2. EGF stimulates tyrosine phosphorylation. Phosphorylated on Ser-33 and Ser-37 by HIPK2. This phosphorylation triggers proteasomal degradation. Phosphorylation at Ser-552 by AMPK promotes stabilization of the protein, enhancing TCF/LEF-mediated transcription. Phosphorylation on Ser-191 and Ser-246 by CDK5. Phosphorylation by CDK2 regulates insulin internalization. Phosphorylation by PTK6 at Tyr-64, Tyr-142, Tyr-331 and/or Tyr-333 with the predominant site at Tyr-64 is not essential for inhibition of transcriptional activity. Phosphorylation by SRC at Tyr-333 promotes interaction with isoform M2 of PKM (PKM2); promoting transcription activation. Post-translationally, ubiquitinated by the SCF(BTRC) E3 ligase complex when phosphorylated by GSK3B, leading to its degradation. Ubiquitinated by a E3 ubiquitin ligase complex containing UBE2D1, SIAH1, CACYBP/SIP, SKP1, APC and TBL1X, leading to its subsequent proteasomal degradation. Ubiquitinated and degraded following interaction with SOX9. Ubiquitinated via 'Lys-11'- and 'Lys-29'-linked ubiquitin chains by UBR5, leading to its stabilization. S-nitrosylation at Cys-619 within adherens junctions promotes VEGF-induced, NO-dependent endothelial cell permeability by disrupting interaction with E-cadherin, thus mediating disassembly adherens junctions. In terms of processing, O-glycosylation at Ser-23 decreases nuclear localization and transcriptional activity, and increases localization to the plasma membrane and interaction with E-cadherin CDH1. Post-translationally, deacetylated at Lys-49 by SIRT1. Expressed in the testis.

It localises to the cytoplasm. The protein localises to the nucleus. Its subcellular location is the cytoskeleton. The protein resides in the cell junction. It is found in the adherens junction. It localises to the cell membrane. The protein localises to the microtubule organizing center. Its subcellular location is the centrosome. The protein resides in the spindle pole. It is found in the synapse. It localises to the cilium basal body. In terms of biological role, key downstream component of the canonical Wnt signaling pathway. In the absence of Wnt, forms a complex with AXIN1, AXIN2, APC, CSNK1A1 and GSK3B that promotes phosphorylation on N-terminal Ser and Thr residues and ubiquitination of CTNNB1 via BTRC and its subsequent degradation by the proteasome. In the presence of Wnt ligand, CTNNB1 is not ubiquitinated and accumulates in the nucleus, where it acts as a coactivator for transcription factors of the TCF/LEF family, leading to activate Wnt responsive genes. Also acts as a coactivator for other transcription factors, such as NR5A2. Promotes epithelial to mesenchymal transition/mesenchymal to epithelial transition (EMT/MET) via driving transcription of CTNNB1/TCF-target genes. Involved in the regulation of cell adhesion, as component of an E-cadherin:catenin adhesion complex. Acts as a negative regulator of centrosome cohesion. Involved in the CDK2/PTPN6/CTNNB1/CEACAM1 pathway of insulin internalization. Blocks anoikis of malignant kidney and intestinal epithelial cells and promotes their anchorage-independent growth by down-regulating DAPK2. Disrupts PML function and PML-NB formation by inhibiting RANBP2-mediated sumoylation of PML. Promotes neurogenesis by maintaining sympathetic neuroblasts within the cell cycle. Involved in chondrocyte differentiation via interaction with SOX9: SOX9-binding competes with the binding sites of TCF/LEF within CTNNB1, thereby inhibiting the Wnt signaling. Acts as a positive regulator of odontoblast differentiation during mesenchymal tooth germ formation, via promoting the transcription of differentiation factors such as LEF1, BMP2 and BMP4. Activity is repressed in a MSX1-mediated manner at the bell stage of mesenchymal tooth germ formation which prevents premature differentiation of odontoblasts. This is Catenin beta-1 from Rattus norvegicus (Rat).